Consider the following 276-residue polypeptide: Protease HtpX homolog (276 aa).

Residues 14-34 (IVLFALIGQALGGTGGMLLAF) form a helical membrane-spanning segment. His130 contacts Zn(2+). Glu131 is a catalytic residue. His134 is a Zn(2+) binding site. 2 helical membrane passes run 145-165 (VAATLAGAITMLSRFALFFGG) and 171-191 (LVSLLMMILAPMAAMLIQSAI). Residue Glu196 participates in Zn(2+) binding.

Belongs to the peptidase M48B family. Zn(2+) is required as a cofactor.

The protein resides in the cell inner membrane. The sequence is that of Protease HtpX homolog from Salinibacter ruber (strain DSM 13855 / M31).